We begin with the raw amino-acid sequence, 323 residues long: Sodium/potassium-transporting ATPase subunit beta-2 (323 aa).

Topologically, residues 1–50 (MPTITEDCIDGFQQYYSRPPERPKKKSLKQMVYDSEDNSYFGRSMDSWAK) are cytoplasmic. Residues 51-71 (IGIFYVAFYGVLAALVAICMW) traverse the membrane as a helical; Signal-anchor for type II membrane protein segment. The Extracellular portion of the chain corresponds to 72–323 (AFFQTLDPRI…GSVHYELLID (252 aa)). 2 cysteine pairs are disulfide-bonded: Cys-153/Cys-165 and Cys-175/Cys-189. N-linked (GlcNAc...) asparagine glycans are attached at residues Asn-180 and Asn-206. An intrachain disulfide couples Cys-241 to Cys-298.

This sequence belongs to the X(+)/potassium ATPases subunit beta family. In terms of assembly, the sodium/potassium-transporting ATPase is composed of a catalytic alpha subunit, an auxiliary non-catalytic beta subunit and an additional regulatory subunit. In embryos, it is expressed in the neurons of the CNS and PNS, in Garland cells and posterior spiracles. In adults, it shows a nervous system specific distribution: optic lobes, brain, thoracic ganglia and axonal pathways in the leg. Both isoforms concentrate in the adult head, isoform 2.2 being predominant. Both isoforms are weakly expressed in the thorax and very poorly expressed in the abdomen.

Its subcellular location is the cell membrane. Its function is as follows. This is the non-catalytic component of the active enzyme, which catalyzes the hydrolysis of ATP coupled with the exchange of Na(+) and K(+) ions across the plasma membrane. The beta subunit regulates, through assembly of alpha/beta heterodimers, the number of sodium pumps transported to the plasma membrane. This chain is Sodium/potassium-transporting ATPase subunit beta-2 (nrv2), found in Drosophila melanogaster (Fruit fly).